The chain runs to 141 residues: Regulator of ribonuclease activity B (141 aa).

Residues 112-141 (GTYFEDPNAPDDEDDNDDLFPPEEDEPRLH) form a disordered region. A compositionally biased stretch (acidic residues) spans 119–141 (NAPDDEDDNDDLFPPEEDEPRLH).

The protein belongs to the RraB family. As to quaternary structure, interacts with the C-terminal region of Rne.

The protein resides in the cytoplasm. In terms of biological role, globally modulates RNA abundance by binding to RNase E (Rne) and regulating its endonucleolytic activity. Can modulate Rne action in a substrate-dependent manner by altering the composition of the degradosome. The polypeptide is Regulator of ribonuclease activity B (Xenorhabdus nematophila (strain ATCC 19061 / DSM 3370 / CCUG 14189 / LMG 1036 / NCIMB 9965 / AN6)).